Consider the following 299-residue polypeptide: Triplex capsid protein 1 (299 aa).

The protein belongs to the herpesviridae TRX1 protein family. In terms of assembly, interacts with TRX2, MCP and capsid vertex component 2/CVC2.

The protein resides in the virion. Its subcellular location is the host nucleus. Functionally, structural component of the T=16 icosahedral capsid. The capsid is composed of pentamers and hexamers of major capsid protein/MCP, which are linked together by heterotrimers called triplexes. These triplexes are formed by a single molecule of triplex protein 1/TRX1 and two copies of triplex protein 2/TRX2. Additionally, TRX1 is required for efficient transport of TRX2 to the nucleus, which is the site of capsid assembly. The protein is Triplex capsid protein 1 of Homo sapiens (Human).